Here is a 121-residue protein sequence, read N- to C-terminus: Estrogen receptor (121 aa).

One can recognise an NR LBD domain in the interval Leu1 to Glu121. Residue Cys45 is the site of S-palmitoyl cysteine attachment.

It belongs to the nuclear hormone receptor family. NR3 subfamily. Binds DNA as a homodimer. Can form a heterodimer with ESR2. Interacts with coactivator NCOA5. Interacts with NCOA7; the interaction is ligand-inducible. Interacts with AKAP13, CUEDC2, HEXIM1, KDM5A, MAP1S, PELP1, SMARD1, and UBE1C. Interacts with MUC1; the interaction is stimulated by 7 beta-estradiol (E2) and enhances ERS1-mediated transcription. Interacts with DNTTIP2, and UIMC1. Interacts with KMT2D/MLL2. Interacts with ATAD2; the interaction is enhanced by estradiol. Interacts with KIF18A and LDB1. Interacts with RLIM (via its C-terminus). Interacts with MACROD1. Interacts with SH2D4A and PLCG. Interacts with SH2D4A; the interaction blocks binding to PLCG and inhibits estrogen-induced cell proliferation. Interacts with DYNLL1. Interacts with CCDC62; the interaction requires estradiol and appears to enhance the transcription of target genes. Interacts with NR2C1; the interaction prevents homodimerization of ESR1 and suppresses its transcriptional activity and cell growth. Interacts with DNAAF4. Interacts with PRMT2. Interacts with PI3KR1 or PIK3R2, SRC and PTK2/FAK1. Interacts with RBFOX2. Interacts with EP300; the interaction is estrogen-dependent and enhanced by CITED1. Interacts with CITED1; the interaction is estrogen-dependent. Interacts with FAM120B, FOXL2, PHB2 and SLC30A9. Interacts with coactivators NCOA3 and NCOA6. Interacts with STK3/MST2 only in the presence of SAV1 and vice-versa. Binds to CSNK1D. Interacts with NCOA2; NCOA2 can interact with ESR1 AF-1 and AF-2 domains simultaneously and mediate their transcriptional synergy. Interacts with DDX5. Interacts with NCOA1; the interaction seems to require a self-association of N-terminal and C-terminal regions. Interacts with ZNF366, DDX17, NFKB1, RELA, SP1 and SP3. Interacts with NRIP1. Interacts with GPER1; the interaction occurs in an estrogen-dependent manner. Interacts with CLOCK and the interaction is stimulated by estrogen. Interacts with TRIP4 (ufmylated); estrogen dependent. Interacts with LMTK3; the interaction phosphorylates ESR1 (in vitro) and protects it against proteasomal degradation. Interacts with CCAR2 (via N-terminus) in a ligand-independent manner. Interacts with ZFHX3. Interacts with SFR1 in a ligand-dependent and -independent manner. Interacts with DCAF13, LATS1 and DCAF1; regulates ESR1 ubiquitination and ubiquitin-mediated proteasomal degradation. Interacts (via DNA-binding domain) with POU4F2 (C-terminus); this interaction increases the estrogen receptor ESR1 transcriptional activity in a DNA- and ligand 17-beta-estradiol-independent manner. Interacts with ESRRB isoform 1. Interacts with UBE3A and WBP2. Interacts with GTF2B. Interacts with RBM39. In the absence of hormonal ligand, interacts with TACC1. Interacts with BAG1; the interaction is promoted in the absence of estradiol (17-beta-estradiol/E2). Interacts with and ubiquitinated by STUB1; the interaction is promoted in the absence of estradiol (17-beta-estradiol/E2). Interacts with NEDD8. In terms of processing, ubiquitinated; regulated by LATS1 via DCAF1 it leads to ESR1 proteasomal degradation. Deubiquitinated by OTUB1. Ubiquitinated by STUB1/CHIP; in the CA1 hippocampal region following loss of endogenous circulating estradiol (17-beta-estradiol/E2). Ubiquitinated by UBR5, leading to its degradation: UBR5 specifically recognizes and binds ligand-bound ESR1 when it is not associated with coactivators (NCOAs). In presence of NCOAs, the UBR5-degron is not accessible, preventing its ubiquitination and degradation. Post-translationally, palmitoylated at Cys-45 by ZDHHC7 and ZDHHC21. Palmitoylation is required for plasma membrane targeting and for rapid intracellular signaling via ERK and AKT kinases and cAMP generation, but not for signaling mediated by the nuclear hormone receptor. Phosphorylated by cyclin A/CDK2 and CK1. Phosphorylation probably enhances transcriptional activity. Dephosphorylation by PPP5C inhibits its transactivation activity. Phosphorylated by LMTK3 (in vitro). In terms of processing, dimethylated by PRMT1. Demethylated by JMJD6.

The protein resides in the nucleus. Its subcellular location is the cytoplasm. It is found in the golgi apparatus. The protein localises to the cell membrane. Nuclear hormone receptor. The steroid hormones and their receptors are involved in the regulation of eukaryotic gene expression and affect cellular proliferation and differentiation in target tissues. Ligand-dependent nuclear transactivation involves either direct homodimer binding to a palindromic estrogen response element (ERE) sequence or association with other DNA-binding transcription factors, such as AP-1/c-Jun, c-Fos, ATF-2, Sp1 and Sp3, to mediate ERE-independent signaling. Ligand binding induces a conformational change allowing subsequent or combinatorial association with multiprotein coactivator complexes through LXXLL motifs of their respective components. Mutual transrepression occurs between the estrogen receptor (ER) and NF-kappa-B in a cell-type specific manner. Decreases NF-kappa-B DNA-binding activity and inhibits NF-kappa-B-mediated transcription from the IL6 promoter and displace RELA/p65 and associated coregulators from the promoter. Recruited to the NF-kappa-B response element of the CCL2 and IL8 promoters and can displace CREBBP. Present with NF-kappa-B components RELA/p65 and NFKB1/p50 on ERE sequences. Can also act synergistically with NF-kappa-B to activate transcription involving respective recruitment adjacent response elements; the function involves CREBBP. Can activate the transcriptional activity of TFF1. Also mediates membrane-initiated estrogen signaling involving various kinase cascades. Essential for MTA1-mediated transcriptional regulation of BRCA1 and BCAS3. Maintains neuronal survival in response to ischemic reperfusion injury when in the presence of circulating estradiol (17-beta-estradiol/E2). The polypeptide is Estrogen receptor (ESR1) (Macaca mulatta (Rhesus macaque)).